The primary structure comprises 287 residues: Nucleotide-binding protein MXAN_6564 (287 aa).

Position 13–20 (13–20 (GMSGSGKS)) interacts with ATP. Position 62–65 (62–65 (DVRE)) interacts with GTP.

The protein belongs to the RapZ-like family.

In terms of biological role, displays ATPase and GTPase activities. In Myxococcus xanthus (strain DK1622), this protein is Nucleotide-binding protein MXAN_6564.